Consider the following 545-residue polypeptide: CTP synthase (545 aa).

The segment at 1–266 is amidoligase domain; that stretch reads MTTNYIFVTG…DDYICKRFSL (266 aa). S14 is a binding site for CTP. A UTP-binding site is contributed by S14. ATP is bound by residues 15 to 20 and D72; that span reads SLGKGI. Residues D72 and E140 each contribute to the Mg(2+) site. Residues 147 to 149, 187 to 192, and K223 each bind CTP; these read DIE and KTKPTQ. Residues 187–192 and K223 each bind UTP; that span reads KTKPTQ. ATP is bound at residue 239–241; it reads KDV. Positions 291 to 542 constitute a Glutamine amidotransferase type-1 domain; it reads TIGMVGKYIE…VKAASEYQKR (252 aa). L-glutamine is bound at residue G352. The active-site Nucleophile; for glutamine hydrolysis is C379. Residues 380-383, E403, and R470 each bind L-glutamine; that span reads LGMQ. Active-site residues include H515 and E517.

Belongs to the CTP synthase family. As to quaternary structure, homotetramer.

It carries out the reaction UTP + L-glutamine + ATP + H2O = CTP + L-glutamate + ADP + phosphate + 2 H(+). The enzyme catalyses L-glutamine + H2O = L-glutamate + NH4(+). The catalysed reaction is UTP + NH4(+) + ATP = CTP + ADP + phosphate + 2 H(+). It functions in the pathway pyrimidine metabolism; CTP biosynthesis via de novo pathway; CTP from UDP: step 2/2. With respect to regulation, allosterically activated by GTP, when glutamine is the substrate; GTP has no effect on the reaction when ammonia is the substrate. The allosteric effector GTP functions by stabilizing the protein conformation that binds the tetrahedral intermediate(s) formed during glutamine hydrolysis. Inhibited by the product CTP, via allosteric rather than competitive inhibition. Functionally, catalyzes the ATP-dependent amination of UTP to CTP with either L-glutamine or ammonia as the source of nitrogen. Regulates intracellular CTP levels through interactions with the four ribonucleotide triphosphates. The protein is CTP synthase of Citrobacter koseri (strain ATCC BAA-895 / CDC 4225-83 / SGSC4696).